A 304-amino-acid chain; its full sequence is Dihydroorotate dehydrogenase B (NAD(+)), catalytic subunit (304 aa).

FMN is bound by residues Ser22 and Lys46–Ala47. Substrate is bound by residues Lys46 and Asn70–Leu74. The FMN site is built by Asn100 and Asn128. Substrate is bound at residue Asn128. Catalysis depends on Cys131, which acts as the Nucleophile. FMN contacts are provided by Lys166 and Ile192. Residue Asn193 to Thr194 coordinates substrate. FMN is bound by residues Gly218, Gly244 to Gly245, and Gly266 to Thr267.

The protein belongs to the dihydroorotate dehydrogenase family. Type 1 subfamily. As to quaternary structure, heterotetramer of 2 PyrK and 2 PyrD type B subunits. It depends on FMN as a cofactor.

It is found in the cytoplasm. The catalysed reaction is (S)-dihydroorotate + NAD(+) = orotate + NADH + H(+). Its pathway is pyrimidine metabolism; UMP biosynthesis via de novo pathway; orotate from (S)-dihydroorotate (NAD(+) route): step 1/1. In terms of biological role, catalyzes the conversion of dihydroorotate to orotate with NAD(+) as electron acceptor. This is Dihydroorotate dehydrogenase B (NAD(+)), catalytic subunit (pyrD) from Fusobacterium nucleatum subsp. nucleatum (strain ATCC 25586 / DSM 15643 / BCRC 10681 / CIP 101130 / JCM 8532 / KCTC 2640 / LMG 13131 / VPI 4355).